Consider the following 654-residue polypeptide: Pyoverdine export ATP-binding/permease protein PvdT (654 aa).

The region spanning 6 to 245 (IELCDIRKAY…QPEQLQANDL (240 aa)) is the ABC transporter domain. 43-50 (GASGSGKS) is a binding site for ATP. 4 helical membrane-spanning segments follow: residues 282–302 (ALTLLGIIIGVASVVVMLAVG), 529–549 (LSLMLGAIAAISLLVGGIGVM), 596–616 (IVIALLVGGGLLLADIAVAFA), and 617–637 (LPAILGAFACAVITGVVFGFM).

This sequence belongs to the ABC transporter superfamily. Macrolide exporter (TC 3.A.1.122) family. In terms of assembly, part of the tripartite efflux system PvdRT-OpmQ, which is composed of an inner membrane component with both ATPase and permease domains, PvdT, a periplasmic membrane fusion protein, PvdR, and an outer membrane component, OpmQ.

It localises to the cell inner membrane. Its function is as follows. Part of the tripartite efflux system PvdRT-OpmQ required for the secretion into the extracellular milieu of the siderophore pyoverdine (PVD), which is involved in iron acquisition. This subunit binds PVD and drives its secretion by hydrolyzing ATP. The system is responsible for export of newly synthesized PVD after the final steps of biosynthesis have taken place in the periplasm. It is also responsible for recycling of PVD after internalization of ferri-PVD into the periplasm by the outer-membrane receptor FpvA and release of iron from PVD, thus making PVD available for new cycles of iron uptake. The polypeptide is Pyoverdine export ATP-binding/permease protein PvdT (Pseudomonas entomophila (strain L48)).